The sequence spans 466 residues: Transcription factor SOX-10 (466 aa).

5 disordered regions span residues 1-67 (MAEE…DDDK), 160-200 (LRMQ…QGGA), 213-275 (DHRH…DFGN), 344-375 (TVSP…QPST), and 433-466 (RPLY…LSRP). The span at 23–32 (LSPGSAPSLG) shows a compositional bias: low complexity. The residue at position 24 (S24) is a Phosphoserine. Residues 62–102 (EADDDKFPVCIREAVSQVLSGYDWTLVPMPVRVNGASKSKP) are dimerization (DIM). The segment at residues 104 to 172 (VKRPMNAFMV…QHKKDHPDYK (69 aa)) is a DNA-binding region (HMG box). Basic and acidic residues predominate over residues 160 to 173 (LRMQHKKDHPDYKY). The span at 183-200 (AAQGEAECPGGEAEQGGA) shows a compositional bias: low complexity. Residues 228–310 (PEHPSGQSHG…LPPNGHPGHV (83 aa)) are transactivation domain (TAM). A compositionally biased stretch (basic and acidic residues) spans 254–271 (ADPKRDGRSLGEGGKPHI). The transactivation domain (TAC) stretch occupies residues 353-466 (KAQVKTETTG…QPVYTTLSRP (114 aa)). The span at 440 to 466 (SDPSPSGPQSHSPTHWEQPVYTTLSRP) shows a compositional bias: polar residues.

Monomer. Interacts with Armcx3 at the mitochondrial outer membrane surface. Interacts with PAX3. In terms of tissue distribution, expressed in oligodendroglia of the spinal tube (at protein level).

The protein resides in the cytoplasm. The protein localises to the nucleus. It localises to the mitochondrion outer membrane. Functionally, transcription factor that plays a central role in developing and mature glia. Specifically activates expression of myelin genes, during oligodendrocyte (OL) maturation, such as DUSP15 and MYRF, thereby playing a central role in oligodendrocyte maturation and CNS myelination. Once induced, MYRF cooperates with SOX10 to implement the myelination program. Transcriptional activator of MITF, acting synergistically with PAX3. Transcriptional activator of MBP, via binding to the gene promoter. The polypeptide is Transcription factor SOX-10 (Sox10) (Mus musculus (Mouse)).